We begin with the raw amino-acid sequence, 367 residues long: Histidinol-phosphate aminotransferase (367 aa).

Residue lysine 221 is modified to N6-(pyridoxal phosphate)lysine.

This sequence belongs to the class-II pyridoxal-phosphate-dependent aminotransferase family. Histidinol-phosphate aminotransferase subfamily. Homodimer. Pyridoxal 5'-phosphate is required as a cofactor.

The catalysed reaction is L-histidinol phosphate + 2-oxoglutarate = 3-(imidazol-4-yl)-2-oxopropyl phosphate + L-glutamate. Its pathway is amino-acid biosynthesis; L-histidine biosynthesis; L-histidine from 5-phospho-alpha-D-ribose 1-diphosphate: step 7/9. In Paracoccus denitrificans (strain Pd 1222), this protein is Histidinol-phosphate aminotransferase.